Here is a 400-residue protein sequence, read N- to C-terminus: Nicotinate phosphoribosyltransferase (400 aa).

Position 220 is a phosphohistidine; by autocatalysis (H220).

It belongs to the NAPRTase family. Post-translationally, transiently phosphorylated on a His residue during the reaction cycle. Phosphorylation strongly increases the affinity for substrates and increases the rate of nicotinate D-ribonucleotide production. Dephosphorylation regenerates the low-affinity form of the enzyme, leading to product release.

The enzyme catalyses nicotinate + 5-phospho-alpha-D-ribose 1-diphosphate + ATP + H2O = nicotinate beta-D-ribonucleotide + ADP + phosphate + diphosphate. Its pathway is cofactor biosynthesis; NAD(+) biosynthesis; nicotinate D-ribonucleotide from nicotinate: step 1/1. In terms of biological role, catalyzes the synthesis of beta-nicotinate D-ribonucleotide from nicotinate and 5-phospho-D-ribose 1-phosphate at the expense of ATP. This is Nicotinate phosphoribosyltransferase from Salmonella schwarzengrund (strain CVM19633).